A 379-amino-acid chain; its full sequence is Protein RecA (379 aa).

Residues 1-14 (MSNEIKSISSSNSS) are compositionally biased toward low complexity. The interval 1-24 (MSNEIKSISSSNSSCPPNEARSGE) is disordered. 84 to 91 (GPESSGKT) lines the ATP pocket.

This sequence belongs to the RecA family.

The protein resides in the cytoplasm. Can catalyze the hydrolysis of ATP in the presence of single-stranded DNA, the ATP-dependent uptake of single-stranded DNA by duplex DNA, and the ATP-dependent hybridization of homologous single-stranded DNAs. It interacts with LexA causing its activation and leading to its autocatalytic cleavage. The polypeptide is Protein RecA (Prochlorococcus marinus (strain SARG / CCMP1375 / SS120)).